The sequence spans 352 residues: Serine protease 55 (352 aa).

An N-terminal signal peptide occupies residues 1–18 (MLLFSVLLLLSLVTGTQL). Positions 68–300 (ITGGMEAEVG…YNLWIEKVTQ (233 aa)) constitute a Peptidase S1 domain. Cys93 and Cys109 are oxidised to a cystine. Catalysis depends on charge relay system residues His108 and Asp156. Disulfide bonds link Cys189/Cys256, Cys222/Cys235, and Cys246/Cys276. An N-linked (GlcNAc...) asparagine glycan is attached at Asn240. The active-site Charge relay system is the Ser250. The segment at 308 to 330 (AEKRRTSVKQKPMGSPVSGVPEP) is disordered. Low complexity predominate over residues 319–330 (PMGSPVSGVPEP). A lipid anchor (GPI-anchor amidated serine) is attached at Ser325. A propeptide spans 326 to 352 (GVPEPGSPRSWLLLCPLSHVLFRAILY) (removed in mature form).

Belongs to the peptidase S1 family. As to expression, only detected in testis. Expressed in spermatogonia, spermatocytes, spermatids, Leydig and Sertoli cells. Expressed in prostate cancer and ovarian cancer (at protein level).

The protein resides in the cell membrane. Its subcellular location is the cytoplasm. The protein localises to the cytosol. Its function is as follows. Probable serine protease, which plays a crucial role in the fertility of male mice including sperm migration and sperm-egg interaction. The chain is Serine protease 55 (PRSS55) from Homo sapiens (Human).